A 409-amino-acid polypeptide reads, in one-letter code: Arginine deiminase (409 aa).

The Amidino-cysteine intermediate role is filled by Cys-399.

This sequence belongs to the arginine deiminase family.

The protein localises to the cytoplasm. It catalyses the reaction L-arginine + H2O = L-citrulline + NH4(+). It participates in amino-acid degradation; L-arginine degradation via ADI pathway; carbamoyl phosphate from L-arginine: step 1/2. This is Arginine deiminase from Borrelia duttonii (strain Ly).